Here is a 602-residue protein sequence, read N- to C-terminus: Elongation factor 4 (602 aa).

Positions 6-188 constitute a tr-type G domain; it reads DHIRNFSIVA…AIVNKLPAPK (183 aa). Residues 18 to 23 and 135 to 138 contribute to the GTP site; these read DHGKST and NKID.

Belongs to the TRAFAC class translation factor GTPase superfamily. Classic translation factor GTPase family. LepA subfamily.

It localises to the cell inner membrane. It catalyses the reaction GTP + H2O = GDP + phosphate + H(+). Its function is as follows. Required for accurate and efficient protein synthesis under certain stress conditions. May act as a fidelity factor of the translation reaction, by catalyzing a one-codon backward translocation of tRNAs on improperly translocated ribosomes. Back-translocation proceeds from a post-translocation (POST) complex to a pre-translocation (PRE) complex, thus giving elongation factor G a second chance to translocate the tRNAs correctly. Binds to ribosomes in a GTP-dependent manner. The polypeptide is Elongation factor 4 (Brucella suis (strain ATCC 23445 / NCTC 10510)).